Consider the following 234-residue polypeptide: Leucyl/phenylalanyl-tRNA--protein transferase (234 aa).

This sequence belongs to the L/F-transferase family.

The protein localises to the cytoplasm. The enzyme catalyses N-terminal L-lysyl-[protein] + L-leucyl-tRNA(Leu) = N-terminal L-leucyl-L-lysyl-[protein] + tRNA(Leu) + H(+). It catalyses the reaction N-terminal L-arginyl-[protein] + L-leucyl-tRNA(Leu) = N-terminal L-leucyl-L-arginyl-[protein] + tRNA(Leu) + H(+). It carries out the reaction L-phenylalanyl-tRNA(Phe) + an N-terminal L-alpha-aminoacyl-[protein] = an N-terminal L-phenylalanyl-L-alpha-aminoacyl-[protein] + tRNA(Phe). Functionally, functions in the N-end rule pathway of protein degradation where it conjugates Leu, Phe and, less efficiently, Met from aminoacyl-tRNAs to the N-termini of proteins containing an N-terminal arginine or lysine. This chain is Leucyl/phenylalanyl-tRNA--protein transferase, found in Pectobacterium carotovorum subsp. carotovorum (strain PC1).